The sequence spans 211 residues: Small ribosomal subunit protein uS3 (211 aa).

Residues 16–85 (IDEYFKTKLV…NPQIEVKQVE (70 aa)) form the KH type-2 domain.

It belongs to the universal ribosomal protein uS3 family. As to quaternary structure, part of the 30S ribosomal subunit.

In terms of biological role, binds the lower part of the 30S subunit head. This chain is Small ribosomal subunit protein uS3, found in Methanococcus maripaludis (strain C7 / ATCC BAA-1331).